The primary structure comprises 211 residues: MRKGNEEKNYREEEYLQLPLDLIVEILKKLPLKSLVRFRCVSKQFSTIICSLRDFIESVVTRHLAQPGQQLPLLAVFHHCVPETFFTVSSSFSQSLKPAIYNPTTKRSVGLPEIGPPVTGFRKCNCLFGYDPVMDQYKVLSMVFDFRELTQTFHVFTLGQSQSWRRIQGINDGKLFPSAVGICIDGTFEFLRFKRDQDCLFCDNETQHIII.

Residues 12-59 enclose the F-box domain; that stretch reads EEEYLQLPLDLIVEILKKLPLKSLVRFRCVSKQFSTIICSLRDFIESV.

The chain is Putative F-box protein At1g52490 from Arabidopsis thaliana (Mouse-ear cress).